The sequence spans 206 residues: Thymidylate kinase (206 aa).

Residue 14–21 (GGEGIGKS) coordinates ATP.

Belongs to the thymidylate kinase family.

It catalyses the reaction dTMP + ATP = dTDP + ADP. Functionally, phosphorylation of dTMP to form dTDP in both de novo and salvage pathways of dTTP synthesis. This Rickettsia bellii (strain OSU 85-389) protein is Thymidylate kinase.